We begin with the raw amino-acid sequence, 126 residues long: Ribosome-binding factor A (126 aa).

This sequence belongs to the RbfA family. In terms of assembly, monomer. Binds 30S ribosomal subunits, but not 50S ribosomal subunits or 70S ribosomes.

The protein localises to the cytoplasm. Its function is as follows. One of several proteins that assist in the late maturation steps of the functional core of the 30S ribosomal subunit. Associates with free 30S ribosomal subunits (but not with 30S subunits that are part of 70S ribosomes or polysomes). Required for efficient processing of 16S rRNA. May interact with the 5'-terminal helix region of 16S rRNA. This Clostridioides difficile (strain 630) (Peptoclostridium difficile) protein is Ribosome-binding factor A.